Consider the following 407-residue polypeptide: Phosphopentomutase (407 aa).

Mn(2+) contacts are provided by D10, D306, H311, D347, H348, and H359.

This sequence belongs to the phosphopentomutase family. Mn(2+) is required as a cofactor.

It is found in the cytoplasm. The enzyme catalyses 2-deoxy-alpha-D-ribose 1-phosphate = 2-deoxy-D-ribose 5-phosphate. It catalyses the reaction alpha-D-ribose 1-phosphate = D-ribose 5-phosphate. Its pathway is carbohydrate degradation; 2-deoxy-D-ribose 1-phosphate degradation; D-glyceraldehyde 3-phosphate and acetaldehyde from 2-deoxy-alpha-D-ribose 1-phosphate: step 1/2. Isomerase that catalyzes the conversion of deoxy-ribose 1-phosphate (dRib-1-P) and ribose 1-phosphate (Rib-1-P) to deoxy-ribose 5-phosphate (dRib-5-P) and ribose 5-phosphate (Rib-5-P), respectively. This is Phosphopentomutase from Salmonella paratyphi A (strain AKU_12601).